The chain runs to 690 residues: MFNPRYTQGTIYPGAHPGLLTPDHQHAAILSVQNSPALENSNISEHWKQQIALATQSRSFSSPHQRAHNAAALARSGGPGFSMNYNARTGAFTGGPNAAGLSSLGGKYNTSSTTTTLTTSTTLNTSSGTTLNSTSKTTTSSVAVDDQKSKSDSKKERRDWTCLDLGGIGLRNVSTDLFKFSFLTELYINHNNLTRLPPEIGKLKNLVILDASGNSIKTIPPELGLLTELREVLLFDNMISVIPAELGTLFQLKILGIEGNPLQDVYKNQIMESGTAGLIAALRDGCPVGPPPPERGWEKLVSDDDDDVNDNVSTSVRDLTAADSNKPSTTSKNLKFTIMSYNVLCERYATSTLYGYTPSWALSWSYRKDLIMQELGGYNADIICLQEVDVENYDTFFAPQMSLKGYKGVHFPKSRVRTMNEVERRIVDGCATFFKTSKYVMHEKMVIEYNQAPSLRRQDIKLTSNMYNRVMTKDNISVITLLENKENGSRLIVANCHIHWDPQFRDVKVIQVAMLMDEIAQVATKFRNMPSKIPSDQLKDERPTYPEYLKIPILICGDFNSVQGSGVYDFLSSGSISQNHEDFMNNDYGEYTVNGRSHAFNLKSAYGESEALSFTNYTPGFKGAIDHIWYTGNSLEVTGLLKGVDKDYLSGVVGFPNAHFPSDHICLLAEFKVKQEKTPLPSSKFNNDKK.

Residues 110-144 (TSSTTTTLTTSTTLNTSSGTTLNSTSKTTTSSVAV) are compositionally biased toward low complexity. Residues 110 to 156 (TSSTTTTLTTSTTLNTSSGTTLNSTSKTTTSSVAVDDQKSKSDSKKE) are disordered. Positions 145-156 (DDQKSKSDSKKE) are enriched in basic and acidic residues. LRR repeat units follow at residues 157–180 (RRDWTCLDLGGIGLRNVSTDLFKF), 182–203 (FLTELYINHNNLTRLPPEIGKL), 205–226 (NLVILDASGNSIKTIPPELGLL), 228–249 (ELREVLLFDNMISVIPAELGTL), and 251–272 (QLKILGIEGNPLQDVYKNQIME). A Mg(2+)-binding site is contributed by E387.

It belongs to the CCR4/nocturin family. As to quaternary structure, subunit of the CCR4-NOT core complex. Interacts with pir2. Requires Mg(2+) as cofactor.

It localises to the cytoplasm. The protein localises to the nucleus. The catalysed reaction is Exonucleolytic cleavage of poly(A) to 5'-AMP.. In terms of biological role, acts as a catalytic component of the CCR4-NOT core complex, which in the nucleus seems to be a general transcription factor, and in the cytoplasm the major mRNA deadenylase involved in mRNA turnover. Ccr4 has 3'-5' RNase activity with a strong preference for polyadenylated substrates and also low exonuclease activity towards single-stranded DNA. Participates in the shortening of poly(A)-tails. Erh1-mmi1 complex-mediated recruitment of CCR4-NOT to target RNAs promotes heterochromatin formation at RNAi-dependent heterochromatin domains (HOODs), including a subset of meiotic genes, lncRNAs and retrotransposons. Recruitment of the CCR4-NOT complex to rDNA promotes rDNA heterochromatin assembly. The polypeptide is CCR4-Not complex 3'-5'-exoribonuclease subunit Ccr4 (ccr4) (Schizosaccharomyces pombe (strain 972 / ATCC 24843) (Fission yeast)).